Here is a 968-residue protein sequence, read N- to C-terminus: uncharacterized protein (968 aa).

The first 27 residues, 1-27 (MHSWKKKLVVSQLALACTLAITSQANA), serve as a signal peptide directing secretion. Positions 703–968 (GLADNGGAWV…SANVGVKYTW (266 aa)) constitute an Autotransporter domain.

This is an uncharacterized protein from Escherichia coli (strain K12).